A 226-amino-acid chain; its full sequence is MNENLFASFITPMILGLPLVTLIVLFPSLLFPTSDRLVNNRFVTLQQWMLQLVSKQMMSIHNPKGQTWTLMLMSLILFIGSTNLLGLLPHSFTPTTQLSMNLGMAISLWAGAVITGFRNKTKTSLAHFLPQGTPTPLIPMLVIIETISLFIQPMALAVRLTANITAGHLLIHLIGGATLALMSISATTALITFIILILLTILEFAVAMIQAYVFTLLVSLYLHDNT.

The next 6 helical transmembrane spans lie at 6-26 (FASF…IVLF), 68-88 (WTLM…LGLL), 97-117 (QLSM…ITGF), 138-158 (IPML…ALAV), 164-184 (ITAG…LMSI), and 200-222 (TILE…SLYL).

This sequence belongs to the ATPase A chain family. As to quaternary structure, component of the ATP synthase complex composed at least of ATP5F1A/subunit alpha, ATP5F1B/subunit beta, ATP5MC1/subunit c (homooctomer), MT-ATP6/subunit a, MT-ATP8/subunit 8, ATP5ME/subunit e, ATP5MF/subunit f, ATP5MG/subunit g, ATP5MK/subunit k, ATP5MJ/subunit j, ATP5F1C/subunit gamma, ATP5F1D/subunit delta, ATP5F1E/subunit epsilon, ATP5PF/subunit F6, ATP5PB/subunit b, ATP5PD/subunit d, ATP5PO/subunit OSCP. ATP synthase complex consists of a soluble F(1) head domain (subunits alpha(3) and beta(3)) - the catalytic core - and a membrane F(0) domain - the membrane proton channel (subunits c, a, 8, e, f, g, k and j). These two domains are linked by a central stalk (subunits gamma, delta, and epsilon) rotating inside the F1 region and a stationary peripheral stalk (subunits F6, b, d, and OSCP). Interacts with DNAJC30; interaction is direct.

It localises to the mitochondrion inner membrane. The catalysed reaction is H(+)(in) = H(+)(out). Subunit a, of the mitochondrial membrane ATP synthase complex (F(1)F(0) ATP synthase or Complex V) that produces ATP from ADP in the presence of a proton gradient across the membrane which is generated by electron transport complexes of the respiratory chain. ATP synthase complex consist of a soluble F(1) head domain - the catalytic core - and a membrane F(1) domain - the membrane proton channel. These two domains are linked by a central stalk rotating inside the F(1) region and a stationary peripheral stalk. During catalysis, ATP synthesis in the catalytic domain of F(1) is coupled via a rotary mechanism of the central stalk subunits to proton translocation. With the subunit c (ATP5MC1), forms the proton-conducting channel in the F(0) domain, that contains two crucial half-channels (inlet and outlet) that facilitate proton movement from the mitochondrial intermembrane space (IMS) into the matrix. Protons are taken up via the inlet half-channel and released through the outlet half-channel, following a Grotthuss mechanism. The chain is ATP synthase F(0) complex subunit a from Bos mutus grunniens (Wild yak).